The sequence spans 323 residues: Ribosomal RNA small subunit methyltransferase H (323 aa).

S-adenosyl-L-methionine is bound by residues 44–46 (AGH), Asp64, Tyr91, Asp112, and Gln119.

Belongs to the methyltransferase superfamily. RsmH family.

Its subcellular location is the cytoplasm. It catalyses the reaction cytidine(1402) in 16S rRNA + S-adenosyl-L-methionine = N(4)-methylcytidine(1402) in 16S rRNA + S-adenosyl-L-homocysteine + H(+). Its function is as follows. Specifically methylates the N4 position of cytidine in position 1402 (C1402) of 16S rRNA. The sequence is that of Ribosomal RNA small subunit methyltransferase H from Nitratidesulfovibrio vulgaris (strain ATCC 29579 / DSM 644 / CCUG 34227 / NCIMB 8303 / VKM B-1760 / Hildenborough) (Desulfovibrio vulgaris).